The chain runs to 74 residues: Mitochondrial import receptor subunit TOM6 homolog (74 aa).

The segment covering 1-20 (MASSGVTVSAAGSASEASEV) has biased composition (low complexity). The disordered stretch occupies residues 1 to 21 (MASSGVTVSAAGSASEASEVP). Alanine 2 carries the N-acetylalanine modification.

It belongs to the Tom6 family. As to quaternary structure, forms part of the preprotein translocase complex of the outer mitochondrial membrane (TOM complex) which consists of at least 7 different proteins (TOMM5, TOMM6, TOMM7, TOMM20, TOMM22, TOMM40 and TOMM70).

It localises to the mitochondrion outer membrane. This is Mitochondrial import receptor subunit TOM6 homolog (Tomm6) from Mus musculus (Mouse).